The following is a 277-amino-acid chain: Release factor glutamine methyltransferase (277 aa).

S-adenosyl-L-methionine-binding positions include 120 to 124 (GTGSG), aspartate 143, tryptophan 171, and asparagine 186. 186–189 (NPPY) lines the substrate pocket.

The protein belongs to the protein N5-glutamine methyltransferase family. PrmC subfamily.

It carries out the reaction L-glutaminyl-[peptide chain release factor] + S-adenosyl-L-methionine = N(5)-methyl-L-glutaminyl-[peptide chain release factor] + S-adenosyl-L-homocysteine + H(+). Functionally, methylates the class 1 translation termination release factors RF1/PrfA and RF2/PrfB on the glutamine residue of the universally conserved GGQ motif. The sequence is that of Release factor glutamine methyltransferase from Coxiella burnetii (strain RSA 493 / Nine Mile phase I).